The primary structure comprises 656 residues: Probable serine/threonine-protein kinase sky1 (656 aa).

The interval 1–127 is disordered; sequence MSDIQQDSTS…KQGGYHPVRR (127 aa). Positions 16-48 are enriched in gly residues; it reads TSLGGTSLGGTSLGGTSLGGTSLGGTSLGGTSL. Composition is skewed to low complexity over residues 49 to 64 and 72 to 89; these read GGST…STNS and TSSN…NNNE. A compositionally biased stretch (polar residues) spans 96 to 108; the sequence is AGSSNKSFMPLNN. The 514-residue stretch at 135-648 folds into the Protein kinase domain; sequence YQVVDKLGWG…AKDCLNHTWL (514 aa). 141–149 serves as a coordination point for ATP; sequence LGWGHFSTV. A disordered region spans residues 157-185; it reads TPITTSSSSSSTTTTTTSSSSNGNGNGNG. Over residues 160–179 the composition is skewed to low complexity; the sequence is TTSSSSSSTTTTTTSSSSNG. ATP is bound at residue Lys-197. The Proton acceptor role is filled by Asp-298. Residues 330-454 form a disordered region; the sequence is RTSSSNKQSQ…TTATATATTT (125 aa). The segment covering 332–355 has biased composition (low complexity); sequence SSSNKQSQQQQQPQQQQSQQNIND. 2 stretches are compositionally biased toward basic and acidic residues: residues 383 to 401 and 413 to 440; these read SNRD…DDNK and ENTD…KEEP. Residues 441-454 show a composition bias toward low complexity; it reads TTTTTTATATATTT.

This sequence belongs to the protein kinase superfamily. CMGC Ser/Thr protein kinase family.

The catalysed reaction is L-seryl-[protein] + ATP = O-phospho-L-seryl-[protein] + ADP + H(+). It carries out the reaction L-threonyl-[protein] + ATP = O-phospho-L-threonyl-[protein] + ADP + H(+). This Dictyostelium discoideum (Social amoeba) protein is Probable serine/threonine-protein kinase sky1 (sky1).